Here is a 198-residue protein sequence, read N- to C-terminus: Na(+)-translocating NADH-quinone reductase subunit E (198 aa).

A run of 6 helical transmembrane segments spans residues 11–31 (AVFI…FLAV), 39–59 (FGLG…NNLV), 77–97 (FLNF…LEMI), 109–129 (LGIF…VSFM), 140–160 (IVYG…LASI), and 176–196 (LGVT…FSGV).

This sequence belongs to the NqrDE/RnfAE family. As to quaternary structure, composed of six subunits; NqrA, NqrB, NqrC, NqrD, NqrE and NqrF.

The protein localises to the cell inner membrane. The catalysed reaction is a ubiquinone + n Na(+)(in) + NADH + H(+) = a ubiquinol + n Na(+)(out) + NAD(+). Functionally, NQR complex catalyzes the reduction of ubiquinone-1 to ubiquinol by two successive reactions, coupled with the transport of Na(+) ions from the cytoplasm to the periplasm. NqrA to NqrE are probably involved in the second step, the conversion of ubisemiquinone to ubiquinol. This is Na(+)-translocating NADH-quinone reductase subunit E from Proteus mirabilis (strain HI4320).